The following is a 343-amino-acid chain: Tetraacyldisaccharide 4'-kinase (343 aa).

61-68 (GVGGNGKT) is a binding site for ATP.

It belongs to the LpxK family.

It catalyses the reaction a lipid A disaccharide + ATP = a lipid IVA + ADP + H(+). Its pathway is glycolipid biosynthesis; lipid IV(A) biosynthesis; lipid IV(A) from (3R)-3-hydroxytetradecanoyl-[acyl-carrier-protein] and UDP-N-acetyl-alpha-D-glucosamine: step 6/6. Its function is as follows. Transfers the gamma-phosphate of ATP to the 4'-position of a tetraacyldisaccharide 1-phosphate intermediate (termed DS-1-P) to form tetraacyldisaccharide 1,4'-bis-phosphate (lipid IVA). This chain is Tetraacyldisaccharide 4'-kinase, found in Colwellia psychrerythraea (strain 34H / ATCC BAA-681) (Vibrio psychroerythus).